A 1191-amino-acid chain; its full sequence is DNA-directed RNA polymerase subunit beta (1191 aa).

Basic and acidic residues predominate over residues R1171–A1181. Residues R1171–D1191 form a disordered region. Low complexity predominate over residues E1182–D1191.

It belongs to the RNA polymerase beta chain family. As to quaternary structure, the RNAP catalytic core consists of 2 alpha, 1 beta, 1 beta' and 1 omega subunit. When a sigma factor is associated with the core the holoenzyme is formed, which can initiate transcription.

It catalyses the reaction RNA(n) + a ribonucleoside 5'-triphosphate = RNA(n+1) + diphosphate. In terms of biological role, DNA-dependent RNA polymerase catalyzes the transcription of DNA into RNA using the four ribonucleoside triphosphates as substrates. This is DNA-directed RNA polymerase subunit beta from Streptococcus agalactiae serotype Ia (strain ATCC 27591 / A909 / CDC SS700).